We begin with the raw amino-acid sequence, 230 residues long: Proteasome subunit alpha (230 aa).

The protein belongs to the peptidase T1A family. In terms of assembly, the 20S proteasome core is composed of 14 alpha and 14 beta subunits that assemble into four stacked heptameric rings, resulting in a barrel-shaped structure. The two inner rings, each composed of seven catalytic beta subunits, are sandwiched by two outer rings, each composed of seven alpha subunits. The catalytic chamber with the active sites is on the inside of the barrel. Has a gated structure, the ends of the cylinder being occluded by the N-termini of the alpha-subunits. Is capped by the proteasome-associated ATPase, ARC.

It localises to the cytoplasm. It participates in protein degradation; proteasomal Pup-dependent pathway. Its activity is regulated as follows. The formation of the proteasomal ATPase ARC-20S proteasome complex, likely via the docking of the C-termini of ARC into the intersubunit pockets in the alpha-rings, may trigger opening of the gate for substrate entry. Interconversion between the open-gate and close-gate conformations leads to a dynamic regulation of the 20S proteasome proteolysis activity. Its function is as follows. Component of the proteasome core, a large protease complex with broad specificity involved in protein degradation. The polypeptide is Proteasome subunit alpha (Thermomonospora curvata (strain ATCC 19995 / DSM 43183 / JCM 3096 / KCTC 9072 / NBRC 15933 / NCIMB 10081 / Henssen B9)).